We begin with the raw amino-acid sequence, 100 residues long: Small ribosomal subunit protein uS14c (100 aa).

It belongs to the universal ribosomal protein uS14 family. In terms of assembly, part of the 30S ribosomal subunit.

Its subcellular location is the plastid. It localises to the chloroplast. Functionally, binds 16S rRNA, required for the assembly of 30S particles. The sequence is that of Small ribosomal subunit protein uS14c from Zygnema circumcarinatum (Green alga).